We begin with the raw amino-acid sequence, 193 residues long: Holliday junction branch migration complex subunit RuvA (193 aa).

A domain I region spans residues 1–64 (MIGRIAGILL…EDAHLLYGFL (64 aa)). The segment at 65-139 (TPQERTTFRE…GKLGADLGAL (75 aa)) is domain II. A flexible linker region spans residues 139 to 143 (LAGAA). The domain III stretch occupies residues 144-193 (SQSDHAADILNALVALGYSEKEGLAAIKNVPAGTGVSEGIKLALKALSKV).

It belongs to the RuvA family. Homotetramer. Forms an RuvA(8)-RuvB(12)-Holliday junction (HJ) complex. HJ DNA is sandwiched between 2 RuvA tetramers; dsDNA enters through RuvA and exits via RuvB. An RuvB hexamer assembles on each DNA strand where it exits the tetramer. Each RuvB hexamer is contacted by two RuvA subunits (via domain III) on 2 adjacent RuvB subunits; this complex drives branch migration. In the full resolvosome a probable DNA-RuvA(4)-RuvB(12)-RuvC(2) complex forms which resolves the HJ.

The protein localises to the cytoplasm. Its function is as follows. The RuvA-RuvB-RuvC complex processes Holliday junction (HJ) DNA during genetic recombination and DNA repair, while the RuvA-RuvB complex plays an important role in the rescue of blocked DNA replication forks via replication fork reversal (RFR). RuvA specifically binds to HJ cruciform DNA, conferring on it an open structure. The RuvB hexamer acts as an ATP-dependent pump, pulling dsDNA into and through the RuvAB complex. HJ branch migration allows RuvC to scan DNA until it finds its consensus sequence, where it cleaves and resolves the cruciform DNA. This is Holliday junction branch migration complex subunit RuvA from Burkholderia ambifaria (strain ATCC BAA-244 / DSM 16087 / CCUG 44356 / LMG 19182 / AMMD) (Burkholderia cepacia (strain AMMD)).